The primary structure comprises 444 residues: Tol-Pal system protein TolB (444 aa).

The first 31 residues, 1–31 (MSFDLNRRQLMISAATAAGALALGPARDAFG), serve as a signal peptide directing secretion.

It belongs to the TolB family. In terms of assembly, the Tol-Pal system is composed of five core proteins: the inner membrane proteins TolA, TolQ and TolR, the periplasmic protein TolB and the outer membrane protein Pal. They form a network linking the inner and outer membranes and the peptidoglycan layer.

It is found in the periplasm. Functionally, part of the Tol-Pal system, which plays a role in outer membrane invagination during cell division and is important for maintaining outer membrane integrity. This is Tol-Pal system protein TolB from Rhodopseudomonas palustris (strain ATCC BAA-98 / CGA009).